Here is a 286-residue protein sequence, read N- to C-terminus: MPIDLDVALGAQLPPVEFSWTSTDVQLYQLGLGAGSDPMNPRELSYLADDTPQVLPTFGNVAATFHLTTPPTVQFPGIDIELSKVLHASERVEVPAPLPPSGSARAVTRFTDIWDKGKAAVICSETTATTPDGLLLWTQKRSIYARGEGGFGGKRGPSGSDVAPERAPDLQVAMPILPQQALLYRLCGDRNPLHSDPEFAAAAGFPRPILHGLCTYGMTCKAIVDALLDSDATAVAGYGARFAGVAYPGETLTVNVWKDGRRLVASVVAPTRDNAVVLSGVELVPA.

The 109-residue stretch at 163–271 (APERAPDLQV…RLVASVVAPT (109 aa)) folds into the MaoC-like domain. Residues D189 and H194 contribute to the active site.

It belongs to the enoyl-CoA hydratase/isomerase family. In terms of assembly, homodimer.

It carries out the reaction (22E)-3-oxochola-4,22-dien-24-oyl-CoA + H2O = (22S)-hydroxy-3-oxo-chol-4-ene-24-oyl-CoA. It functions in the pathway steroid metabolism; cholesterol degradation. Its function is as follows. Degradation of the cholesterol side chain involves 3 multistep beta-oxidation cycles, this is involved in the second cycle. Hydrates bulky steroid enoyl-CoA esters, has highest activity with 3-OCDO-CoA (3-oxochol-4,22-dien-24-oyl-CoA) making (22S)-HOCO-CoA, followed by octenoyl-CoA, with weaker activity on 3-OCDS-CoA (3-oxocholest-4,24-dien-26-oyl-CoA) and none on 3-OPDC-CoA (3-oxo-pregna-4,17-diene-20- carboxyl-CoA). Hydrates the same substrate as EchA19, but the 2 enzymes make different stereoisomers of the product. In Mycobacterium tuberculosis (strain ATCC 25618 / H37Rv), this protein is Enoyl-CoA hydratase ChsH3.